We begin with the raw amino-acid sequence, 234 residues long: tRNA1(Val) (adenine(37)-N6)-methyltransferase (234 aa).

It belongs to the methyltransferase superfamily. tRNA (adenine-N(6)-)-methyltransferase family.

It localises to the cytoplasm. It catalyses the reaction adenosine(37) in tRNA1(Val) + S-adenosyl-L-methionine = N(6)-methyladenosine(37) in tRNA1(Val) + S-adenosyl-L-homocysteine + H(+). Specifically methylates the adenine in position 37 of tRNA(1)(Val) (anticodon cmo5UAC). The protein is tRNA1(Val) (adenine(37)-N6)-methyltransferase of Phocaeicola vulgatus (strain ATCC 8482 / DSM 1447 / JCM 5826 / CCUG 4940 / NBRC 14291 / NCTC 11154) (Bacteroides vulgatus).